Consider the following 82-residue polypeptide: Small ribosomal subunit protein uS17 (82 aa).

This sequence belongs to the universal ribosomal protein uS17 family. In terms of assembly, part of the 30S ribosomal subunit.

Functionally, one of the primary rRNA binding proteins, it binds specifically to the 5'-end of 16S ribosomal RNA. This is Small ribosomal subunit protein uS17 from Tolumonas auensis (strain DSM 9187 / NBRC 110442 / TA 4).